The sequence spans 198 residues: Ribonuclease HII (198 aa).

Residues 2–192 (MYYCGIDEAG…IKKIIDNQKN (191 aa)) form the RNase H type-2 domain. Positions 8, 9, and 101 each coordinate a divalent metal cation.

It belongs to the RNase HII family. Requires Mn(2+) as cofactor. It depends on Mg(2+) as a cofactor.

Its subcellular location is the cytoplasm. The catalysed reaction is Endonucleolytic cleavage to 5'-phosphomonoester.. Functionally, endonuclease that specifically degrades the RNA of RNA-DNA hybrids. The polypeptide is Ribonuclease HII (Natranaerobius thermophilus (strain ATCC BAA-1301 / DSM 18059 / JW/NM-WN-LF)).